Here is a 201-residue protein sequence, read N- to C-terminus: MTQDKPIVETISNAGEQVTNVFGQFWQLVTSKNTTNNGDSKPIKIEQLPIYAEDNAPLKQKFLPEEPLPLQREFATIRIACEQEYDRVAERFKVVDCAMTQTKKAATKCNAYLTEEWTALPKAAAITVGGMAGFVLGLKRGPVGRLLTTTIGLATMAAFCYPIEAVDVAKTGRAHAEQTWYSFQESPTPSAIVKTNLSPPK.

Residues methionine 1–serine 31 constitute a mitochondrion transit peptide. Topologically, residues lysine 32–tryptophan 117 are cytoplasmic. The helical transmembrane segment at threonine 118 to leucine 138 threads the bilayer. Residues lysine 139–arginine 145 lie on the Mitochondrial intermembrane side of the membrane. A helical transmembrane segment spans residues leucine 146–valine 166. Residues aspartate 167 to lysine 201 are Cytoplasmic-facing.

This sequence belongs to the apolipoprotein O/MICOS complex subunit Mic27 family. As to quaternary structure, component of the mitochondrial contact site and cristae organizing system (MICOS) complex.

Its subcellular location is the mitochondrion outer membrane. Functionally, sustains mitochondrial morphology probably through maintaining cristae morphology. May act as a component of the MICOS complex, a large protein complex of the mitochondria. This Caenorhabditis elegans protein is MICOS complex subunit MIC27.